The sequence spans 195 residues: Probable nicotinate-nucleotide adenylyltransferase (195 aa).

It belongs to the NadD family.

The catalysed reaction is nicotinate beta-D-ribonucleotide + ATP + H(+) = deamido-NAD(+) + diphosphate. Its pathway is cofactor biosynthesis; NAD(+) biosynthesis; deamido-NAD(+) from nicotinate D-ribonucleotide: step 1/1. Functionally, catalyzes the reversible adenylation of nicotinate mononucleotide (NaMN) to nicotinic acid adenine dinucleotide (NaAD). The chain is Probable nicotinate-nucleotide adenylyltransferase from Mesorhizobium japonicum (strain LMG 29417 / CECT 9101 / MAFF 303099) (Mesorhizobium loti (strain MAFF 303099)).